Consider the following 68-residue polypeptide: Potassium channel toxin epsilon-KTx 1.2 (68 aa).

Positions 1-26 are cleaved as a signal peptide; it reads MKFSCGFLLIFLVLSAMIATFSEVEA. Disulfide bonds link cysteine 30-cysteine 38, cysteine 33-cysteine 54, cysteine 37-cysteine 47, and cysteine 42-cysteine 52. Tyrosine 55 is subject to Tyrosine amide. The propeptide occupies 57–68; that stretch reads RSDLNEEFENYQ.

This sequence belongs to the short scorpion toxin superfamily. Potassium channel inhibitor family. Epsilon-KTx 01 subfamily. In terms of tissue distribution, expressed by the venom gland.

It is found in the secreted. Potassium channel blocker. At 3 uM, this toxin blocks voltage-gated potassium channels rKv1.2/KCNA2 (5%), hKv1.3/KCNA3 (10%),rKv1.4/KCNA4 (20%), Kv11/hERG (24%), and Shaker-IR (27%). The chain is Potassium channel toxin epsilon-KTx 1.2 from Tityus serrulatus (Brazilian scorpion).